The primary structure comprises 392 residues: S-adenosylmethionine synthase (392 aa).

Mg(2+) is bound at residue glutamate 10. Histidine 16 lines the ATP pocket. A K(+)-binding site is contributed by glutamate 44. Residues glutamate 57 and glutamine 100 each contribute to the L-methionine site. Residues aspartate 168–lysine 170, serine 236–phenylalanine 239, aspartate 247, arginine 253–lysine 254, alanine 270, lysine 274, and lysine 278 each bind ATP. Aspartate 247 is a binding site for L-methionine. Lysine 278 serves as a coordination point for L-methionine.

The protein belongs to the AdoMet synthase family. As to quaternary structure, homotetramer. It depends on Mn(2+) as a cofactor. Requires Mg(2+) as cofactor. The cofactor is Co(2+). K(+) serves as cofactor.

It is found in the cytoplasm. It catalyses the reaction L-methionine + ATP + H2O = S-adenosyl-L-methionine + phosphate + diphosphate. The protein operates within amino-acid biosynthesis; S-adenosyl-L-methionine biosynthesis; S-adenosyl-L-methionine from L-methionine: step 1/1. Catalyzes the formation of S-adenosylmethionine from methionine and ATP. The reaction comprises two steps that are both catalyzed by the same enzyme: formation of S-adenosylmethionine (AdoMet) and triphosphate, and subsequent hydrolysis of the triphosphate. This chain is S-adenosylmethionine synthase (SAMS), found in Phaseolus lunatus (Lima bean).